The sequence spans 355 residues: MRVLLVKTSSLGDVIHTLPALTDAARAIPGIQFDWVVEEGFAEIPAWHPAVARVIPVAIRRWRKNLWQTLRNGEWRRFKQRLKEVDYDLVIDAQGLLKSAWLTRYVGKTPVAGLDRDSAREPLASRFYRRAYPVAWGQHAVERTRQLFAQALDYPLPESVGDYGLDREQLADADPGAPYLVFLHGTTWVTKHWPEAYWRELAERMCERGWSVRLPWGSAAERERAGRLAAGLENAAVLPRLSLAGMAKVLAGARACVAVDTGLGHLAAALDVPTLSLFGPTNPGFTGAYGRSQVHLGSDFPCAPCLKKTCTYQPTEEDRKLFDLKREQPLCFTRLNPQRVATQLEAMLLAPETLR.

8 residues coordinate ADP-L-glycero-beta-D-manno-heptose: threonine 186, threonine 187, lysine 191, glutamate 221, aspartate 260, threonine 261, glycine 262, and histidine 265.

It belongs to the glycosyltransferase 9 family.

It is found in the cell inner membrane. The catalysed reaction is an alpha-Kdo-(2-&gt;4)-alpha-Kdo-(2-&gt;6)-lipid A + ADP-L-glycero-beta-D-manno-heptose = an L-alpha-D-Hep-(1-&gt;5)-[alpha-Kdo-(2-&gt;4)]-alpha-Kdo-(2-&gt;6)-lipid A + ADP + H(+). The protein operates within bacterial outer membrane biogenesis; LPS core biosynthesis. Glycosyltransferase involved in the biosynthesis of the core oligosaccharide region of lipopolysaccharide (LPS). Catalyzes the addition of the first heptose unit to one 3-deoxy-D-manno-octulosonic acid (Kdo) residue of the Kdo2-lipid A module. In Pseudomonas aeruginosa (strain ATCC 15692 / DSM 22644 / CIP 104116 / JCM 14847 / LMG 12228 / 1C / PRS 101 / PAO1), this protein is Lipopolysaccharide heptosyltransferase 1.